Here is a 572-residue protein sequence, read N- to C-terminus: Phosphoenolpyruvate-protein phosphotransferase (572 aa).

Catalysis depends on H190, which acts as the Tele-phosphohistidine intermediate. Residues R297 and R333 each contribute to the phosphoenolpyruvate site. Mg(2+) is bound by residues E427 and D451. Residues 450-451 and R461 each bind phosphoenolpyruvate; that span reads ND. Catalysis depends on C498, which acts as the Proton donor.

This sequence belongs to the PEP-utilizing enzyme family. In terms of assembly, homodimer. Mg(2+) is required as a cofactor.

It localises to the cytoplasm. It catalyses the reaction L-histidyl-[protein] + phosphoenolpyruvate = N(pros)-phospho-L-histidyl-[protein] + pyruvate. In terms of biological role, general (non sugar-specific) component of the phosphoenolpyruvate-dependent sugar phosphotransferase system (sugar PTS). This major carbohydrate active-transport system catalyzes the phosphorylation of incoming sugar substrates concomitantly with their translocation across the cell membrane. Enzyme I transfers the phosphoryl group from phosphoenolpyruvate (PEP) to the phosphoryl carrier protein (HPr). This is Phosphoenolpyruvate-protein phosphotransferase (ptsI) from Mycoplasma pneumoniae (strain ATCC 29342 / M129 / Subtype 1) (Mycoplasmoides pneumoniae).